The chain runs to 314 residues: Mitochondrial 2-oxoglutarate/malate carrier protein (314 aa).

Position 2 is an N-acetylalanine (alanine 2). A Phosphoserine modification is found at serine 6. 3 Solcar repeats span residues 23–108, 117–208, and 217–306; these read VKFL…LFER, PGFL…SKQF, and DNIL…MNKA. A helical transmembrane segment spans residues 24–42; that stretch reads KFLFGGLAGMGATVFVQPL. Lysine 57 is modified (N6-succinyllysine). Residue lysine 73 is modified to N6-acetyllysine. The helical transmembrane segment at 83-101 threads the bilayer; that stretch reads GLSAGLLRQATYTTTRLGI. Residue tyrosine 102 is modified to Phosphotyrosine. The next 3 helical transmembrane spans lie at 119–140, 183–202, and 222–240; these read FLLK…GPPA, GCIP…LASY, and HFCA…SMPV. N6-acetyllysine is present on lysine 256. The chain crosses the membrane as a helical span at residues 281–300; the sequence is GFTPYYARLGPHTVLTFIFL.

This sequence belongs to the mitochondrial carrier (TC 2.A.29) family. Interacts with SMIM26. Expressed in liver, heart and brain.

It localises to the mitochondrion inner membrane. It carries out the reaction (S)-malate(in) + 2-oxoglutarate(out) = (S)-malate(out) + 2-oxoglutarate(in). It catalyses the reaction malonate(in) + 2-oxoglutarate(out) = malonate(out) + 2-oxoglutarate(in). The catalysed reaction is succinate(in) + 2-oxoglutarate(out) = succinate(out) + 2-oxoglutarate(in). The enzyme catalyses maleate(in) + 2-oxoglutarate(out) = maleate(out) + 2-oxoglutarate(in). It carries out the reaction oxaloacetate(in) + 2-oxoglutarate(out) = oxaloacetate(out) + 2-oxoglutarate(in). Functionally, catalyzes the transport of 2-oxoglutarate (alpha-oxoglutarate) across the inner mitochondrial membrane in an electroneutral exchange for malate. Can also exchange 2-oxoglutarate for other dicarboxylic acids such as malonate, succinate, maleate and oxaloacetate, although with lower affinity. Contributes to several metabolic processes, including the malate-aspartate shuttle, the oxoglutarate/isocitrate shuttle, in gluconeogenesis from lactate, and in nitrogen metabolism. Maintains mitochondrial fusion and fission events, and the organization and morphology of cristae. Involved in the regulation of apoptosis. Helps protect from cytotoxic-induced apoptosis by modulating glutathione levels in mitochondria. This is Mitochondrial 2-oxoglutarate/malate carrier protein (Slc25a11) from Rattus norvegicus (Rat).